Consider the following 609-residue polypeptide: Replication protein E1 (609 aa).

A Nuclear localization signal motif is present at residues 81–83; sequence KRK. Phosphoserine; by host occurs at positions 87 and 94. A Nuclear export signal motif is present at residues 93–102; that stretch reads LSPRLQSITI. The interval 149 to 312 is DNA-binding region; sequence QGVKGLGIVK…TMINHQTAQA (164 aa). Residues 411–561 form the SF3 helicase domain; it reads INFIRFLDIF…FPFDNNNMPQ (151 aa). 437–444 lines the ATP pocket; it reads GPPDTGKS. Lys-518 is covalently cross-linked (Glycyl lysine isopeptide (Lys-Gly) (interchain with G-Cter in SUMO)). Residues 584-609 form a disordered region; it reads DQEEEGDDGQSQRTFQCTAREPNGHL.

This sequence belongs to the papillomaviridae E1 protein family. As to quaternary structure, can form hexamers. Interacts with E2 protein; this interaction increases E1 DNA binding specificity. Interacts with host DNA polymerase subunit POLA2. Interacts with host single stranded DNA-binding protein RPA1. Interacts with host TOP1; this interaction stimulates the enzymatic activity of TOP1. Post-translationally, phosphorylated. Sumoylated.

It is found in the host nucleus. It catalyses the reaction Couples ATP hydrolysis with the unwinding of duplex DNA by translocating in the 3'-5' direction.. It carries out the reaction ATP + H2O = ADP + phosphate + H(+). In terms of biological role, ATP-dependent DNA 3'-5' helicase required for initiation of viral DNA replication. It forms a complex with the viral E2 protein. The E1-E2 complex binds to the replication origin which contains binding sites for both proteins. During the initial step, a dimer of E1 interacts with a dimer of protein E2 leading to a complex that binds the viral origin of replication with high specificity. Then, a second dimer of E1 displaces the E2 dimer in an ATP-dependent manner to form the E1 tetramer. Following this, two E1 monomers are added to each half of the site, which results in the formation of two E1 trimers on the viral ori. Subsequently, two hexamers will be created. The double hexamer acts as a bi-directional helicase machinery and unwinds the viral DNA and then recruits the host DNA polymerase to start replication. This Homo sapiens (Human) protein is Replication protein E1.